A 146-amino-acid chain; its full sequence is MGRFIFVSFGLLVVFLSLSGTGADCPSDWSSYDLYCYRVFQEKKNWEDAEKFCRQQHTDSHLVSFDSSEEADFVASKTFPVLNYDLVWIGLGSVWNACKLQWSDGTELKYNAWSAESECITSKSIDNQWFTRSCSQTYPFVCKFQA.

A signal peptide spans 1–23 (MGRFIFVSFGLLVVFLSLSGTGA). 3 disulfide bridges follow: Cys25/Cys36, Cys53/Cys142, and Cys119/Cys134. The C-type lectin domain occupies 32-143 (YDLYCYRVFQ…CSQTYPFVCK (112 aa)).

This sequence belongs to the snaclec family. As to quaternary structure, heteromultimer; disulfide-linked. As to expression, expressed by the venom gland.

Its subcellular location is the secreted. Functionally, interferes with one step of hemostasis (modulation of platelet aggregation, or coagulation cascade, for example). The polypeptide is Snaclec stejaggregin-B subunit beta-1 (Trimeresurus stejnegeri (Chinese green tree viper)).